The sequence spans 254 residues: Pimeloyl-[acyl-carrier protein] methyl ester esterase (254 aa).

Residues 14–242 form the AB hydrolase-1 domain; sequence LVLLHGWGMN…ASHAPFISHP (229 aa). Substrate-binding positions include Trp-20, 82-83, and 143-147; these read SL and FLAIQ. Ser-82 serves as the catalytic Nucleophile. Active-site residues include Asp-207 and His-235. A substrate-binding site is contributed by His-235.

This sequence belongs to the AB hydrolase superfamily. Carboxylesterase BioH family. As to quaternary structure, monomer.

Its subcellular location is the cytoplasm. The enzyme catalyses 6-carboxyhexanoyl-[ACP] methyl ester + H2O = 6-carboxyhexanoyl-[ACP] + methanol + H(+). It participates in cofactor biosynthesis; biotin biosynthesis. The physiological role of BioH is to remove the methyl group introduced by BioC when the pimeloyl moiety is complete. It allows to synthesize pimeloyl-ACP via the fatty acid synthetic pathway through the hydrolysis of the ester bonds of pimeloyl-ACP esters. The chain is Pimeloyl-[acyl-carrier protein] methyl ester esterase from Aeromonas hydrophila subsp. hydrophila (strain ATCC 7966 / DSM 30187 / BCRC 13018 / CCUG 14551 / JCM 1027 / KCTC 2358 / NCIMB 9240 / NCTC 8049).